The chain runs to 174 residues: ATP-dependent protease subunit HslV (174 aa).

Residue T2 is part of the active site. The Na(+) site is built by G157, C160, and T163.

It belongs to the peptidase T1B family. HslV subfamily. In terms of assembly, a double ring-shaped homohexamer of HslV is capped on each side by a ring-shaped HslU homohexamer. The assembly of the HslU/HslV complex is dependent on binding of ATP.

The protein localises to the cytoplasm. The catalysed reaction is ATP-dependent cleavage of peptide bonds with broad specificity.. With respect to regulation, allosterically activated by HslU binding. Protease subunit of a proteasome-like degradation complex believed to be a general protein degrading machinery. This is ATP-dependent protease subunit HslV from Shewanella piezotolerans (strain WP3 / JCM 13877).